The following is a 141-amino-acid chain: Ribonuclease P protein component (141 aa).

2 disordered regions span residues 37 to 56 (RTEE…VGFT) and 114 to 141 (RRIT…VNGK). Over residues 114–124 (RRITAKGERRS) the composition is skewed to basic and acidic residues.

This sequence belongs to the RnpA family. In terms of assembly, consists of a catalytic RNA component (M1 or rnpB) and a protein subunit.

The enzyme catalyses Endonucleolytic cleavage of RNA, removing 5'-extranucleotides from tRNA precursor.. In terms of biological role, RNaseP catalyzes the removal of the 5'-leader sequence from pre-tRNA to produce the mature 5'-terminus. It can also cleave other RNA substrates such as 4.5S RNA. The protein component plays an auxiliary but essential role in vivo by binding to the 5'-leader sequence and broadening the substrate specificity of the ribozyme. The chain is Ribonuclease P protein component from Brucella melitensis biotype 1 (strain ATCC 23456 / CCUG 17765 / NCTC 10094 / 16M).